The chain runs to 364 residues: Palmitoyltransferase ZDHHC9 (364 aa).

The Cytoplasmic portion of the chain corresponds to 1 to 35 (MSVMVVRKKVTRKWEKLPGRNTFCCDGRVMMARQK). The chain crosses the membrane as a helical span at residues 36-56 (GIFYLTLFLILGTCTLFFAFE). Topologically, residues 57–63 (CRYLAVQ) are lumenal. Residues 64 to 84 (LSPAIPVFAAMLFLFSMATLL) form a helical membrane-spanning segment. The Cytoplasmic segment spans residues 85–183 (RTSFSDPGVI…NCVGKRNYRY (99 aa)). One can recognise a DHHC domain in the interval 139-189 (KYCYTCKIFRPPRASHCSICDNCVERFDHHCPWVGNCVGKRNYRYFYLFIL). The active-site S-palmitoyl cysteine intermediate is the cysteine 169. The chain crosses the membrane as a helical span at residues 184–204 (FYLFILSLSLLTIYVFAFNIV). The Lumenal portion of the chain corresponds to 205–228 (YVALKSLKIGFLETLKETPGTVLE). A helical membrane pass occupies residues 229–249 (VLICFFTLWSVVGLTGFHTFL). Topologically, residues 250 to 364 (VALNQTTNED…PPQEAAEAEK (115 aa)) are cytoplasmic. The disordered stretch occupies residues 303–364 (PLEESGSRPP…PPQEAAEAEK (62 aa)). A compositionally biased stretch (polar residues) spans 310-323 (RPPSTQETSSSLLP). Residues 346–356 (EMPPPEPPEPP) are compositionally biased toward pro residues.

This sequence belongs to the DHHC palmitoyltransferase family. ERF2/ZDHHC9 subfamily. In terms of assembly, interacts with GOLGA7. Highly expressed in kidney, skeletal muscle, brain, lung and liver. Absent in thymus, spleen and leukocytes.

The protein resides in the endoplasmic reticulum membrane. It is found in the golgi apparatus membrane. The enzyme catalyses L-cysteinyl-[protein] + hexadecanoyl-CoA = S-hexadecanoyl-L-cysteinyl-[protein] + CoA. Functionally, palmitoyltransferase that catalyzes the addition of palmitate onto various protein substrates, such as ADRB2, GSDMD, HRAS, NRAS and CGAS. The ZDHHC9-GOLGA7 complex is a palmitoyltransferase specific for HRAS and NRAS. May have a palmitoyltransferase activity toward the beta-2 adrenergic receptor/ADRB2 and therefore regulate G protein-coupled receptor signaling. Acts as a regulator of innate immunity by catalyzing palmitoylation of CGAS, thereby promoting CGAS homodimerization and cyclic GMP-AMP synthase activity. Activates pyroptosis by catalyzing palmitoylation of gasdermin-D (GSDMD), thereby promoting membrane translocation and pore formation of GSDMD. Its function is as follows. (Microbial infection) Through a sequential action with ZDHHC20, rapidly and efficiently palmitoylates SARS coronavirus-2/SARS-CoV-2 spike protein following its synthesis in the endoplasmic reticulum (ER). In the infected cell, promotes spike biogenesis by protecting it from premature ER degradation, increases half-life and controls the lipid organization of its immediate membrane environment. Once the virus has formed, spike palmitoylation controls fusion with the target cell. The chain is Palmitoyltransferase ZDHHC9 from Homo sapiens (Human).